The chain runs to 440 residues: Glutamate--tRNA ligase 1 (440 aa).

Residues 7-17 (PSPTGYLHVGN) carry the 'HIGH' region motif. A 'KMSKS' region motif is present at residues 238–242 (KISKR). An ATP-binding site is contributed by K241.

It belongs to the class-I aminoacyl-tRNA synthetase family. Glutamate--tRNA ligase type 1 subfamily. In terms of assembly, monomer.

It localises to the cytoplasm. It carries out the reaction tRNA(Glu) + L-glutamate + ATP = L-glutamyl-tRNA(Glu) + AMP + diphosphate. Catalyzes the attachment of glutamate to tRNA(Glu) in a two-step reaction: glutamate is first activated by ATP to form Glu-AMP and then transferred to the acceptor end of tRNA(Glu). The sequence is that of Glutamate--tRNA ligase 1 from Wolbachia sp. subsp. Brugia malayi (strain TRS).